The primary structure comprises 120 residues: Small ribosomal subunit protein uS13 (120 aa).

The interval 93–120 (RKGLPVRGQTTKNNARTRKGKKKTVGSK) is disordered. The segment covering 107-120 (ARTRKGKKKTVGSK) has biased composition (basic residues).

It belongs to the universal ribosomal protein uS13 family. In terms of assembly, part of the 30S ribosomal subunit. Forms a loose heterodimer with protein S19. Forms two bridges to the 50S subunit in the 70S ribosome.

Located at the top of the head of the 30S subunit, it contacts several helices of the 16S rRNA. In the 70S ribosome it contacts the 23S rRNA (bridge B1a) and protein L5 of the 50S subunit (bridge B1b), connecting the 2 subunits; these bridges are implicated in subunit movement. Contacts the tRNAs in the A and P-sites. This is Small ribosomal subunit protein uS13 from Helicobacter acinonychis (strain Sheeba).